The chain runs to 257 residues: 3-deoxy-manno-octulosonate cytidylyltransferase (257 aa).

This sequence belongs to the KdsB family.

The protein localises to the cytoplasm. The catalysed reaction is 3-deoxy-alpha-D-manno-oct-2-ulosonate + CTP = CMP-3-deoxy-beta-D-manno-octulosonate + diphosphate. The protein operates within nucleotide-sugar biosynthesis; CMP-3-deoxy-D-manno-octulosonate biosynthesis; CMP-3-deoxy-D-manno-octulosonate from 3-deoxy-D-manno-octulosonate and CTP: step 1/1. It participates in bacterial outer membrane biogenesis; lipopolysaccharide biosynthesis. Activates KDO (a required 8-carbon sugar) for incorporation into bacterial lipopolysaccharide in Gram-negative bacteria. The chain is 3-deoxy-manno-octulosonate cytidylyltransferase from Halorhodospira halophila (strain DSM 244 / SL1) (Ectothiorhodospira halophila (strain DSM 244 / SL1)).